A 47-amino-acid chain; its full sequence is Variabilin (47 aa).

The Cell attachment site motif lies at 32-34 (RGD).

Contains 2 disulfide bonds. Expressed in salivary glands.

The protein localises to the secreted. Potently inhibits platelet aggregation induced by ADP (IC(50)=157 nM, complete inhibition at 514 nM). Also inhibits platelet aggregation induced by collagen and by the thrombin receptor peptide SFLLRNP. Is a potent antagonist of the fibrinogen receptor glycoprotein IIb-IIIa (ITGA2B/ITGB3) and the vitronectin receptor alpha-v/beta-3 (ITGAV/ITGB3). The chain is Variabilin from Dermacentor variabilis (American dog tick).